A 351-amino-acid chain; its full sequence is N-acetyl-gamma-glutamyl-phosphate reductase (351 aa).

C154 is an active-site residue.

Belongs to the NAGSA dehydrogenase family. Type 1 subfamily.

It is found in the cytoplasm. It catalyses the reaction N-acetyl-L-glutamate 5-semialdehyde + phosphate + NADP(+) = N-acetyl-L-glutamyl 5-phosphate + NADPH + H(+). It functions in the pathway amino-acid biosynthesis; L-arginine biosynthesis; N(2)-acetyl-L-ornithine from L-glutamate: step 3/4. Functionally, catalyzes the NADPH-dependent reduction of N-acetyl-5-glutamyl phosphate to yield N-acetyl-L-glutamate 5-semialdehyde. In Prochlorococcus marinus (strain MIT 9312), this protein is N-acetyl-gamma-glutamyl-phosphate reductase.